Here is a 206-residue protein sequence, read N- to C-terminus: Adenylate kinase (206 aa).

10 to 15 contributes to the ATP binding site; the sequence is GAGKGT. The tract at residues 30–59 is NMP; that stretch reads STGDMLRAAVAAGTPVGLKAKDIMASGGLV. AMP is bound by residues Thr-31, Arg-36, 57–59, 85–88, and Gln-92; these read GLV and GFPR. The tract at residues 126–142 is LID; sequence NRVAETTARGEQVRADD. Residue Arg-127 coordinates ATP. AMP contacts are provided by Arg-139 and Arg-150. Met-178 serves as a coordination point for ATP.

It belongs to the adenylate kinase family. In terms of assembly, monomer.

It is found in the cytoplasm. It catalyses the reaction AMP + ATP = 2 ADP. It functions in the pathway purine metabolism; AMP biosynthesis via salvage pathway; AMP from ADP: step 1/1. Functionally, catalyzes the reversible transfer of the terminal phosphate group between ATP and AMP. Plays an important role in cellular energy homeostasis and in adenine nucleotide metabolism. In Nitrobacter winogradskyi (strain ATCC 25391 / DSM 10237 / CIP 104748 / NCIMB 11846 / Nb-255), this protein is Adenylate kinase.